The following is a 394-amino-acid chain: 1-deoxy-D-xylulose 5-phosphate reductoisomerase (394 aa).

Thr-14, Gly-15, Ser-16, Ile-17, Gly-40, and Asn-128 together coordinate NADPH. Residue Lys-129 participates in 1-deoxy-D-xylulose 5-phosphate binding. Glu-130 contributes to the NADPH binding site. Asp-154 is a Mn(2+) binding site. 4 residues coordinate 1-deoxy-D-xylulose 5-phosphate: Ser-155, Glu-156, Ser-180, and His-203. Position 156 (Glu-156) interacts with Mn(2+). Position 209 (Gly-209) interacts with NADPH. Residues Ser-216, Asn-221, Lys-222, and Glu-225 each contribute to the 1-deoxy-D-xylulose 5-phosphate site. Glu-225 is a binding site for Mn(2+).

It belongs to the DXR family. Requires Mg(2+) as cofactor. Mn(2+) is required as a cofactor.

The enzyme catalyses 2-C-methyl-D-erythritol 4-phosphate + NADP(+) = 1-deoxy-D-xylulose 5-phosphate + NADPH + H(+). It participates in isoprenoid biosynthesis; isopentenyl diphosphate biosynthesis via DXP pathway; isopentenyl diphosphate from 1-deoxy-D-xylulose 5-phosphate: step 1/6. Its function is as follows. Catalyzes the NADPH-dependent rearrangement and reduction of 1-deoxy-D-xylulose-5-phosphate (DXP) to 2-C-methyl-D-erythritol 4-phosphate (MEP). The sequence is that of 1-deoxy-D-xylulose 5-phosphate reductoisomerase from Xylella fastidiosa (strain M12).